A 316-amino-acid polypeptide reads, in one-letter code: tRNA dimethylallyltransferase (316 aa).

Position 17-24 (17-24 (GPTASGKT)) interacts with ATP. Residue 19–24 (TASGKT) coordinates substrate. Interaction with substrate tRNA regions lie at residues 42 to 45 (DSAL), 166 to 170 (QRLSR), 247 to 252 (RCVGYR), and 280 to 287 (KRQITWLR).

Belongs to the IPP transferase family. Monomer. Requires Mg(2+) as cofactor.

The enzyme catalyses adenosine(37) in tRNA + dimethylallyl diphosphate = N(6)-dimethylallyladenosine(37) in tRNA + diphosphate. Catalyzes the transfer of a dimethylallyl group onto the adenine at position 37 in tRNAs that read codons beginning with uridine, leading to the formation of N6-(dimethylallyl)adenosine (i(6)A). In Escherichia coli O157:H7, this protein is tRNA dimethylallyltransferase.